A 162-amino-acid chain; its full sequence is Probable tRNA (guanine(10)-N2)-dimethyltransferase (162 aa).

It belongs to the methyltransferase superfamily. Trm-G10 family. In terms of assembly, monomer.

It localises to the cytoplasm. The catalysed reaction is guanosine(10) in tRNA + 2 S-adenosyl-L-methionine = N(2)-dimethylguanosine(10) in tRNA + 2 S-adenosyl-L-homocysteine + 2 H(+). Catalyzes the adenosylmethionine-dependent methylation of the exocyclic amino group (N(2)) of guanosine at position 10 of various tRNAs. Acts via a two-step process that leads to the formation of either N(2)-monomethyl (m(2)G) or N(2)-dimethylguanosine (m(2)(2)G). The chain is Probable tRNA (guanine(10)-N2)-dimethyltransferase (trmG10) from Methanothermococcus thermolithotrophicus (Methanococcus thermolithotrophicus).